The following is a 225-amino-acid chain: Cytidylate kinase (225 aa).

An ATP-binding site is contributed by 12–20 (GPSGAGKGT).

This sequence belongs to the cytidylate kinase family. Type 1 subfamily.

Its subcellular location is the cytoplasm. The enzyme catalyses CMP + ATP = CDP + ADP. The catalysed reaction is dCMP + ATP = dCDP + ADP. The sequence is that of Cytidylate kinase from Pectobacterium carotovorum subsp. carotovorum (strain PC1).